Consider the following 997-residue polypeptide: Sorting nexin-19 (997 aa).

Positions 95–273 (ERQLEQEINR…ILVSIFSKYR (179 aa)) constitute a PXA domain. Disordered stretches follow at residues 313–333 (SSPA…SPEI) and 413–437 (GALE…APGT). The span at 422–435 (GSECMEGAEAEEAP) shows a compositional bias: acidic residues. The region spanning 538 to 668 (LRITGTITAR…EFLALNTDAR (131 aa)) is the PX domain. Positions 587 and 634 each coordinate a 1,2-diacyl-sn-glycero-3-phospho-(1D-myo-inositol-3-phosphate). The tract at residues 697-728 (FPRSEPQSPTEELSEAENESKPQTEGKKASKS) is disordered. Over residues 714–724 (NESKPQTEGKK) the composition is skewed to basic and acidic residues.

It belongs to the sorting nexin family. As to quaternary structure, interacts with PTPRN.

The protein localises to the early endosome membrane. It is found in the cytoplasmic vesicle membrane. Functionally, plays a role in intracellular vesicle trafficking and exocytosis. May play a role in maintaining insulin-containing dense core vesicles in pancreatic beta-cells and in preventing their degradation. May play a role in insulin secretion. Interacts with membranes containing phosphatidylinositol 3-phosphate (PtdIns(3P)). The polypeptide is Sorting nexin-19 (Mus musculus (Mouse)).